Consider the following 90-residue polypeptide: UPF0237 protein NMA1909 (90 aa).

The region spanning 5–83 (VITVIGKDRV…LDIRMQNEEI (79 aa)) is the ACT domain.

This sequence belongs to the UPF0237 family.

The polypeptide is UPF0237 protein NMA1909 (Neisseria meningitidis serogroup A / serotype 4A (strain DSM 15465 / Z2491)).